The chain runs to 88 residues: Small ribosomal subunit protein bS20 (88 aa).

Residues 1–20 (MANHKSAEKRARQTIKRTER) are disordered.

Belongs to the bacterial ribosomal protein bS20 family.

In terms of biological role, binds directly to 16S ribosomal RNA. The protein is Small ribosomal subunit protein bS20 of Campylobacter fetus subsp. fetus (strain 82-40).